A 1441-amino-acid chain; its full sequence is Histone-lysine N-methyltransferase SETD5 (1441 aa).

The interval 1–28 is disordered; the sequence is MSIAIPLGVTTPDTSYSDMAAGSDPESV. The residue at position 70 (Leu-70) is a Phosphothreonine. Ser-72 and Val-74 each carry phosphoserine. Residues 156-202 are disordered; the sequence is TPTSITLTVRRTKPKKRKKSPEKGRAAPKTKKIKNSPSEAQNLDENT. Over residues 165 to 189 the composition is skewed to basic residues; sequence RRTKPKKRKKSPEKGRAAPKTKKIK. Positions 190 to 202 are enriched in polar residues; that stretch reads NSPSEAQNLDENT. The SET domain occupies 269–390; it reads MQLQLGRVTR…KDAEVTIAFD (122 aa). Disordered regions lie at residues 417–683 and 793–816; these read NPNA…TVIS and MTQT…ETSN. Composition is skewed to acidic residues over residues 450-461 and 479-501; these read LEQQNEVPEENP and EEVD…DDQE. 2 stretches are compositionally biased toward low complexity: residues 539–552 and 561–572; these read SSSD…SSEI and AAPESEVSSPVS. The segment covering 575-588 has biased composition (polar residues); that stretch reads AIPSTPQSTGVNTR. The segment covering 611–621 has biased composition (basic residues); that stretch reads SRPRPKSRISR. Low complexity predominate over residues 635-650; that stretch reads QAIAQQAELSQAALEE. The span at 652–683 shows a compositional bias: polar residues; it reads GSNNSVTPPEAGNTDSSGENRQLTGSDPTVIS. Phosphoserine is present on residues Ser-829 and Ser-852. Disordered stretches follow at residues 849–883, 1036–1228, and 1243–1441; these read QPLS…ECRN, DLSR…SKGA, and CDSP…TGLS. Thr-855 is subject to Phosphothreonine. Basic residues predominate over residues 1062 to 1076; the sequence is QRKKVSLLEYRKRKQ. A compositionally biased stretch (low complexity) spans 1087 to 1107; it reads DSSQSKSKSSGAGQGSSNSVS. The segment covering 1144–1163 has biased composition (polar residues); sequence PSDSRGTSSSHCRPQENISS. Ser-1197 carries the phosphoserine modification. Residues 1250 to 1259 are compositionally biased toward low complexity; sequence SQSLLQQSSS. A compositionally biased stretch (polar residues) spans 1265-1275; the sequence is PTQSPGYSYRT. A compositionally biased stretch (low complexity) spans 1284 to 1300; the sequence is PSHGSSESSLSSTSYPS. The span at 1319-1333 shows a compositional bias: polar residues; that stretch reads YYSSQPHSGNSTGSN. Residues 1335-1372 are compositionally biased toward low complexity; sequence PRRSCSSSAASPTPQGPSDSPTSDSVSQSSTGTLSSTS. Composition is skewed to polar residues over residues 1373 to 1382, 1389 to 1412, and 1429 to 1441; these read FPQNSRSSLP, SLPN…NSQH, and LQGS…TGLS.

In terms of assembly, interacts with components of the PAF1 complex (PAF1C) such as LEO1, CTR9 and CDC73. Interacts with NCOR1. Interacts with HDAC3. In terms of tissue distribution, ubiquitously expressed.

The protein localises to the nucleus. It localises to the chromosome. It catalyses the reaction L-lysyl(9)-[histone H3] + S-adenosyl-L-methionine = N(6)-methyl-L-lysyl(9)-[histone H3] + S-adenosyl-L-homocysteine + H(+). It carries out the reaction L-lysyl(36)-[histone H3] + 3 S-adenosyl-L-methionine = N(6),N(6),N(6)-trimethyl-L-lysyl(36)-[histone H3] + 3 S-adenosyl-L-homocysteine + 3 H(+). Its function is as follows. Chromatin regulator required for brain development: acts as a regulator of RNA elongation rate, thereby regulating neural stem cell (NSC) proliferation and synaptic transmission. May act by mediating trimethylation of 'Lys-36' of histone H3 (H3K36me3), which is essential to allow on-time RNA elongation dynamics. Also monomethylates 'Lys-9' of histone H3 (H3K9me1) in vitro. The relevance of histone methyltransferase activity is however subject to discussion. The sequence is that of Histone-lysine N-methyltransferase SETD5 from Mus musculus (Mouse).